Consider the following 407-residue polypeptide: Cytochrome P450 NovI (407 aa).

Cys357 lines the heme pocket.

It belongs to the cytochrome P450 family. Heme is required as a cofactor.

It participates in antibiotic biosynthesis; novobiocin biosynthesis. Functionally, together with NovH, involved in the formation of a beta-OH-Tyr intermediate in the novobiocin biosynthesis pathway, an aminocoumarin family antibiotic that targets bacterial DNA gyrases. Acts as a cytochrome P450-type monooxygenase with specificity for the tyrosyl-S-NovH acyl enzyme (L-Tyr-S-NovH) to form the beta-OH-Tyr intermediate (L-beta-OH-Tyr-S-NovH). This Streptomyces niveus (Streptomyces spheroides) protein is Cytochrome P450 NovI (novI).